The chain runs to 421 residues: Dihydroorotase (421 aa).

Histidine 60 and histidine 62 together coordinate Zn(2+). Substrate contacts are provided by residues 62 to 64 (HFR) and asparagine 94. Aspartate 151, histidine 178, and histidine 231 together coordinate Zn(2+). Asparagine 277 serves as a coordination point for substrate. A Zn(2+)-binding site is contributed by aspartate 304. Aspartate 304 is a catalytic residue. Histidine 308 provides a ligand contact to substrate.

The protein belongs to the metallo-dependent hydrolases superfamily. DHOase family. Class I DHOase subfamily. Zn(2+) is required as a cofactor.

It catalyses the reaction (S)-dihydroorotate + H2O = N-carbamoyl-L-aspartate + H(+). It participates in pyrimidine metabolism; UMP biosynthesis via de novo pathway; (S)-dihydroorotate from bicarbonate: step 3/3. Its function is as follows. Catalyzes the reversible cyclization of carbamoyl aspartate to dihydroorotate. The polypeptide is Dihydroorotase (Clostridioides difficile (strain 630) (Peptoclostridium difficile)).